We begin with the raw amino-acid sequence, 41 residues long: Large ribosomal subunit protein bL36 (41 aa).

It belongs to the bacterial ribosomal protein bL36 family.

The polypeptide is Large ribosomal subunit protein bL36 (Caulobacter vibrioides (strain ATCC 19089 / CIP 103742 / CB 15) (Caulobacter crescentus)).